A 477-amino-acid polypeptide reads, in one-letter code: Ubiquinone biosynthesis monooxygenase COQ6, mitochondrial (477 aa).

A mitochondrion-targeting transit peptide spans 1–25; sequence MLGVLRIQGALASAGQARLLSVRLL.

The protein belongs to the UbiH/COQ6 family. In terms of assembly, component of a multi-subunit COQ enzyme complex. FAD serves as cofactor.

Its subcellular location is the mitochondrion inner membrane. The enzyme catalyses a 4-hydroxy-3-(all-trans-polyprenyl)benzoate + 2 reduced [2Fe-2S]-[ferredoxin] + O2 + 2 H(+) = a 3,4-dihydroxy-5-(all-trans-polyprenyl)benzoate + 2 oxidized [2Fe-2S]-[ferredoxin] + H2O. The catalysed reaction is a 2-methoxy-6-(all-trans-polyprenyl)phenol + 2 reduced [2Fe-2S]-[ferredoxin] + O2 + 2 H(+) = a 2-methoxy-6-(all-trans-polyprenyl)benzene-1,4-diol + 2 oxidized [2Fe-2S]-[ferredoxin] + H2O. It participates in cofactor biosynthesis; ubiquinone biosynthesis. FAD-dependent monooxygenase required for two non-consecutive steps during ubiquinone biosynthesis. Required for the C5-ring hydroxylation during ubiquinone biosynthesis by catalyzing the hydroxylation of 4-hydroxy-3-(all-trans-polyprenyl)benzoic acid to 3,4-dihydroxy-5-(all-trans-polyprenyl)benzoic acid. Also acts downstream of coq4, for the C1-hydroxylation during ubiquinone biosynthesis by catalyzing the hydroxylation of 2-methoxy-6-(all-trans-polyprenyl)phenol to 2-methoxy-6-(all-trans-polyprenyl)benzene-1,4-diol. The electrons required for the hydroxylation reaction are funneled indirectly to Coq6 from NADPH via a ferredoxin/ferredoxin reductase system. This Drosophila melanogaster (Fruit fly) protein is Ubiquinone biosynthesis monooxygenase COQ6, mitochondrial.